Consider the following 408-residue polypeptide: tRNA-specific 2-thiouridylase MnmA (408 aa).

ATP-binding positions include 27 to 34 (AMSGGVDS) and Leu53. Cys121 functions as the Nucleophile in the catalytic mechanism. A disulfide bridge connects residues Cys121 and Cys222. An ATP-binding site is contributed by Gly145. Residues 172 to 174 (RDQ) form an interaction with tRNA region. Residue Cys222 is the Cysteine persulfide intermediate of the active site.

This sequence belongs to the MnmA/TRMU family.

It is found in the cytoplasm. The catalysed reaction is S-sulfanyl-L-cysteinyl-[protein] + uridine(34) in tRNA + AH2 + ATP = 2-thiouridine(34) in tRNA + L-cysteinyl-[protein] + A + AMP + diphosphate + H(+). In terms of biological role, catalyzes the 2-thiolation of uridine at the wobble position (U34) of tRNA, leading to the formation of s(2)U34. The chain is tRNA-specific 2-thiouridylase MnmA from Rhizobium etli (strain CIAT 652).